The chain runs to 450 residues: Ribosomal protein uS12 methylthiotransferase RimO (450 aa).

The 111-residue stretch at 16 to 126 folds into the MTTase N-terminal domain; it reads PRISFVSLGC…VLDAVHQAVP (111 aa). [4Fe-4S] cluster is bound by residues Cys-25, Cys-61, Cys-90, Cys-157, Cys-161, and Cys-164. Residues 143 to 380 form the Radical SAM core domain; the sequence is LTPRHYAYLK…MLKQQAISAR (238 aa). The TRAM domain occupies 383-449; that stretch reads KRKVGTRQQV…AYDLIGSAVG (67 aa).

Belongs to the methylthiotransferase family. RimO subfamily. [4Fe-4S] cluster is required as a cofactor.

The protein localises to the cytoplasm. The catalysed reaction is L-aspartate(89)-[ribosomal protein uS12]-hydrogen + (sulfur carrier)-SH + AH2 + 2 S-adenosyl-L-methionine = 3-methylsulfanyl-L-aspartate(89)-[ribosomal protein uS12]-hydrogen + (sulfur carrier)-H + 5'-deoxyadenosine + L-methionine + A + S-adenosyl-L-homocysteine + 2 H(+). In terms of biological role, catalyzes the methylthiolation of an aspartic acid residue of ribosomal protein uS12. This chain is Ribosomal protein uS12 methylthiotransferase RimO, found in Azorhizobium caulinodans (strain ATCC 43989 / DSM 5975 / JCM 20966 / LMG 6465 / NBRC 14845 / NCIMB 13405 / ORS 571).